A 179-amino-acid polypeptide reads, in one-letter code: Large ribosomal subunit protein uL5 (179 aa).

Belongs to the universal ribosomal protein uL5 family. In terms of assembly, part of the 50S ribosomal subunit; part of the 5S rRNA/L5/L18/L25 subcomplex. Contacts the 5S rRNA and the P site tRNA. Forms a bridge to the 30S subunit in the 70S ribosome.

In terms of biological role, this is one of the proteins that bind and probably mediate the attachment of the 5S RNA into the large ribosomal subunit, where it forms part of the central protuberance. In the 70S ribosome it contacts protein S13 of the 30S subunit (bridge B1b), connecting the 2 subunits; this bridge is implicated in subunit movement. Contacts the P site tRNA; the 5S rRNA and some of its associated proteins might help stabilize positioning of ribosome-bound tRNAs. The protein is Large ribosomal subunit protein uL5 of Clostridium botulinum (strain Alaska E43 / Type E3).